The following is a 470-amino-acid chain: GDP-Man:Man(3)GlcNAc(2)-PP-Dol alpha-1,2-mannosyltransferase (470 aa).

Topologically, residues 1–15 (MSDTVISLISHSITT) are lumenal. A helical transmembrane segment spans residues 16-36 (VFYLVPLIIALIIPFSLYSGF). The Cytoplasmic segment spans residues 37-131 (RRKSKTVAFF…HYKHCTMLFQ (95 aa)). The helical intramembrane region spans 132–152 (ALAGLILALEAWFRMVPAVFI). At 153 to 378 (DSMGYPLSLP…ISIHTMHNEH (226 aa)) the chain is on the cytoplasmic side. Positions 379 to 399 (FGISVVEAMAASTIILSNDSG) form an intramembrane region, helical. Topologically, residues 400 to 470 (GPRMDIVKDY…HWNKEIEKVL (71 aa)) are cytoplasmic.

This sequence belongs to the glycosyltransferase group 1 family. Glycosyltransferase 4 subfamily.

It is found in the endoplasmic reticulum membrane. It carries out the reaction an alpha-D-Man-(1-&gt;3)-[alpha-D-Man-(1-&gt;6)]-beta-D-Man-(1-&gt;4)-beta-D-GlcNAc-(1-&gt;4)-alpha-D-GlcNAc-diphospho-di-trans,poly-cis-dolichol + 2 GDP-alpha-D-mannose = an alpha-D-Man-(1-&gt;2)-alpha-D-Man-(1-&gt;2)-alpha-D-Man-(1-&gt;3)-[alpha-D-Man-(1-&gt;6)]-beta-D-Man-(1-&gt;4)-beta-D-GlcNAc-(1-&gt;4)-alpha-D-GlcNAc-diphospho-di-trans,poly-cis-dolichol + 2 GDP + 2 H(+). It functions in the pathway protein modification; protein glycosylation. In terms of biological role, GDP-Man:Man(3)GlcNAc(2)-PP-Dol alpha-1,2-mannosyltransferase that operates in the biosynthetic pathway of dolichol-linked oligosaccharides, the glycan precursors employed in protein asparagine (N)-glycosylation. The assembly of dolichol-linked oligosaccharides begins on the cytosolic side of the endoplasmic reticulum membrane and finishes in its lumen. The sequential addition of sugars to dolichol pyrophosphate produces dolichol-linked oligosaccharides containing fourteen sugars, including two GlcNAcs, nine mannoses and three glucoses. Once assembled, the oligosaccharide is transferred from the lipid to nascent proteins by oligosaccharyltransferases. Catalyzes, on the cytoplasmic face of the endoplasmic reticulum, the addition of the fourth and fifth mannose residues to the dolichol-linked oligosaccharide chain, to produce Man(5)GlcNAc(2)-PP-dolichol core oligosaccharide. Man(5)GlcNAc(2)-PP-dolichol is a substrate for ALG3, the following enzyme in the biosynthetic pathway. This Caenorhabditis elegans protein is GDP-Man:Man(3)GlcNAc(2)-PP-Dol alpha-1,2-mannosyltransferase.